The primary structure comprises 139 residues: Protein spalt-accessory (139 aa).

The signal sequence occupies residues 1 to 16; it reads MKLLIALLALVTAAIA. The segment covering 60 to 75 has biased composition (gly residues); it reads GIGQGGVHPGQGGFAG. The interval 60 to 139 is disordered; sequence GIGQGGVHPG…HHEHHGHHRH (80 aa). Residues 109-121 are compositionally biased toward basic and acidic residues; sequence NPHEYPEHHGEHH. Residues 122–139 are compositionally biased toward basic residues; it reads REHHEHHGHHEHHGHHRH.

It is found in the secreted. Its function is as follows. Likely to be involved in the establishment of the head. This is Protein spalt-accessory (sala) from Drosophila simulans (Fruit fly).